Consider the following 101-residue polypeptide: Urease subunit beta (101 aa).

Belongs to the urease beta subunit family. As to quaternary structure, heterotrimer of UreA (gamma), UreB (beta) and UreC (alpha) subunits. Three heterotrimers associate to form the active enzyme.

It is found in the cytoplasm. The enzyme catalyses urea + 2 H2O + H(+) = hydrogencarbonate + 2 NH4(+). It functions in the pathway nitrogen metabolism; urea degradation; CO(2) and NH(3) from urea (urease route): step 1/1. The chain is Urease subunit beta from Rhizobium rhizogenes (strain K84 / ATCC BAA-868) (Agrobacterium radiobacter).